Here is a 680-residue protein sequence, read N- to C-terminus: Dihydroxyacetone phosphate acyltransferase (680 aa).

Phosphoserine is present on residues S12 and S17. Positions 162-167 match the HXXXXD motif motif; the sequence is HRSYID. An N6-acetyllysine modification is found at K643. A Microbody targeting signal motif is present at residues 678-680; that stretch reads AKL.

This sequence belongs to the GPAT/DAPAT family. As to quaternary structure, part of a heterotrimeric complex composed of GNPAT, AGPS and a modified form of GNPAT.

It is found in the peroxisome membrane. It catalyses the reaction dihydroxyacetone phosphate + an acyl-CoA = a 1-acylglycerone 3-phosphate + CoA. The catalysed reaction is dihydroxyacetone phosphate + hexadecanoyl-CoA = 1-hexadecanoylglycerone 3-phosphate + CoA. Its pathway is membrane lipid metabolism; glycerophospholipid metabolism. In terms of biological role, dihydroxyacetonephosphate acyltransferase catalyzing the first step in the biosynthesis of plasmalogens, a subset of phospholipids that differ from other glycerolipids by having an alkyl chain attached through a vinyl ether linkage at the sn-1 position of the glycerol backbone, and which unique physical properties have an impact on various aspects of cell signaling and membrane biology. The polypeptide is Dihydroxyacetone phosphate acyltransferase (Homo sapiens (Human)).